A 660-amino-acid chain; its full sequence is Bifunctional polymyxin resistance protein ArnA (660 aa).

Residues 1–304 form a formyltransferase ArnAFT region; sequence MKAVVFAYHN…EMYLVEGMRF (304 aa). The active-site Proton donor; for formyltransferase activity is the His104. (6R)-10-formyltetrahydrofolate contacts are provided by residues Arg114 and 136–140; that span reads TVKPD. A dehydrogenase ArnADH region spans residues 316–660; that stretch reads RRQKVLIMGA…FLKTAVEETK (345 aa). NAD(+)-binding positions include Asp349 and 370 to 371; that span reads DI. UDP-alpha-D-glucuronate-binding positions include Ala395, Tyr400, and 434 to 435; that span reads TS. The active-site Proton acceptor; for decarboxylase activity is Glu436. UDP-alpha-D-glucuronate is bound by residues Arg462, Asn494, 528 to 537, and Tyr615; that span reads KLIDGGEQKR. The active-site Proton donor; for decarboxylase activity is the Arg621.

In the N-terminal section; belongs to the Fmt family. UDP-L-Ara4N formyltransferase subfamily. The protein in the C-terminal section; belongs to the NAD(P)-dependent epimerase/dehydratase family. UDP-glucuronic acid decarboxylase subfamily. In terms of assembly, homohexamer, formed by a dimer of trimers.

The catalysed reaction is UDP-alpha-D-glucuronate + NAD(+) = UDP-beta-L-threo-pentopyranos-4-ulose + CO2 + NADH. It catalyses the reaction UDP-4-amino-4-deoxy-beta-L-arabinose + (6R)-10-formyltetrahydrofolate = UDP-4-deoxy-4-formamido-beta-L-arabinose + (6S)-5,6,7,8-tetrahydrofolate + H(+). Its pathway is nucleotide-sugar biosynthesis; UDP-4-deoxy-4-formamido-beta-L-arabinose biosynthesis; UDP-4-deoxy-4-formamido-beta-L-arabinose from UDP-alpha-D-glucuronate: step 1/3. The protein operates within nucleotide-sugar biosynthesis; UDP-4-deoxy-4-formamido-beta-L-arabinose biosynthesis; UDP-4-deoxy-4-formamido-beta-L-arabinose from UDP-alpha-D-glucuronate: step 3/3. It functions in the pathway bacterial outer membrane biogenesis; lipopolysaccharide biosynthesis. Bifunctional enzyme that catalyzes the oxidative decarboxylation of UDP-glucuronic acid (UDP-GlcUA) to UDP-4-keto-arabinose (UDP-Ara4O) and the addition of a formyl group to UDP-4-amino-4-deoxy-L-arabinose (UDP-L-Ara4N) to form UDP-L-4-formamido-arabinose (UDP-L-Ara4FN). The modified arabinose is attached to lipid A and is required for resistance to polymyxin and cationic antimicrobial peptides. The chain is Bifunctional polymyxin resistance protein ArnA from Shewanella sediminis (strain HAW-EB3).